The primary structure comprises 206 residues: Ras-related protein RABG3f (206 aa).

15–23 is a binding site for GTP; it reads GDSGVGKTS. An Effector region motif is present at residues 37–45; that stretch reads YKATIGADF. Residues 63 to 67, 125 to 128, and 158 to 159 each bind GTP; these read DTAGQ, NKVD, and SA. 2 S-geranylgeranyl cysteine lipidation sites follow: Cys-204 and Cys-206. Cys-206 carries the cysteine methyl ester modification.

This sequence belongs to the small GTPase superfamily. Rab family. Interacts with VPS35A.

Its subcellular location is the endosome membrane. The protein localises to the vacuole membrane. The protein resides in the prevacuolar compartment membrane. Regulated by guanine nucleotide exchange factors (GEFs) which promote the exchange of bound GDP for free GTP. Regulated by the MON1-CCZ1 complex which serves as a link between Rab5 and Rab7 protein families in PVCs and mediates PVC maturation. Functionally, essential for trafficking from prevacuolar compartments to vacuoles. Involved in the trafficking of newly synthesized protein to vacuoles. Essential for plant growth. Participates in the recruitment of the core retromer components to the endosomal membrane by interacting with VPS35A. This is Ras-related protein RABG3f (RABG3F) from Arabidopsis thaliana (Mouse-ear cress).